Reading from the N-terminus, the 390-residue chain is EF-hand calcium-binding domain-containing protein 4A (390 aa).

The span at 1-27 shows a compositional bias: low complexity; that stretch reads MSPRSTLRSPLPSRTARSSASSDTPSP. Residues 1–37 are disordered; sequence MSPRSTLRSPLPSRTARSSASSDTPSPGADRQDRMSK. 2 consecutive EF-hand domains span residues 33 to 66 and 67 to 102; these read DRMS…QELP and LSPE…LVGS. 5 residues coordinate Ca(2+): aspartate 80, aspartate 82, asparagine 84, tyrosine 86, and glutamate 91. A coiled-coil region spans residues 173–357; sequence SHLQDALKEK…DDKDAHQAQK (185 aa). The segment at 206 to 234 is disordered; that stretch reads DMESQLKEERERRQALDSMRQGDKKEQLL.

It belongs to the EFCAB4 family.

The sequence is that of EF-hand calcium-binding domain-containing protein 4A (cracr2b) from Danio rerio (Zebrafish).